A 101-amino-acid chain; its full sequence is Conantokin-L (101 aa).

The signal sequence occupies residues 1–21 (MQLYTYLYLLVPLVTFHLILG). Residues 22 to 80 (TGTLDHGGALTERRSTDAIALKPEPVLLQKSSARSTDDNGNDRLTQMKRILKKRGNKAR) constitute a propeptide that is removed on maturation. 4-carboxyglutamate is present on residues Glu83, Glu84, Glu91, and Glu95. Positions 91 and 95 each coordinate a divalent metal cation. An Asparagine amide modification is found at Asn99.

Belongs to the conotoxin B superfamily. The cofactor is Ca(2+). Requires Mg(2+) as cofactor. In terms of tissue distribution, expressed by the venom duct.

The protein resides in the secreted. Conantokins inhibit N-methyl-D-aspartate (NMDA) receptors. This toxin is far less potent as an anticonvulsant compound than conantokin-R. It induces sleep-like symptoms in mice. This Conus lynceus (Lynceus cone) protein is Conantokin-L.